Consider the following 477-residue polypeptide: MTGQSLWDVSEANVEDGEIRINVGGFKRRLRSHTLLRFPETRLGRLLLCHSREAILELCDDYDDVQREFYFDRNPELFPYVLHFYHTGKLHVMAELCVFSFSQEIEYWGINEFFIDSCCSYSYHGRKVEPEQEKWDEQSDQESTTSSFDEILAFYNDASKFDGQPLGNFRRQLWLALDNPGYSVLSRVFSILSILVVMGSIITMCLNSLPDFQIPDSQGNPGEDPRFEIVEHFGIAWFTFELVARFAVAPDFLKFFKNALNLIDLMSIVPFYITLVVNLVVESTPTLANLGRVAQVLRLMRIFRILKLARHSTGLRSLGATLKYSYKEVGLLLLYLSVGISIFSVVAYTIEKEENEGLATIPACWWWATVSMTTVGYGDVVPGTTAGKLTASACILAGILVVVLPITLIFNKFSHFYRRQKQLESAMRSCDFGDGMKEVPSVNLRDYYAHKVKSLMASLTNMSRSSPSELSLNDSLR.

The Cytoplasmic portion of the chain corresponds to Met-1 to Val-184. Residues Leu-185–Leu-206 traverse the membrane as a helical segment. At Asn-207–Pro-225 the chain is on the extracellular side. Residues Arg-226–Val-248 form a helical membrane-spanning segment. Residues Ala-249–Ala-259 lie on the Cytoplasmic side of the membrane. The chain crosses the membrane as a helical span at residues Leu-260 to Val-280. Topologically, residues Val-281 to Leu-290 are extracellular. The helical; Voltage-sensor transmembrane segment at Gly-291–His-311 threads the bilayer. At Ser-312–Tyr-326 the chain is on the cytoplasmic side. The chain crosses the membrane as a helical span at residues Lys-327–Tyr-348. The Extracellular portion of the chain corresponds to Thr-349–Ile-361. The segment at residues Pro-362 to Thr-373 is an intramembrane region (helical). The Selectivity filter signature appears at Thr-374–Asp-379. An intramembrane segment occupies Thr-374 to Val-381. At Pro-382–Lys-388 the chain is on the extracellular side. The chain crosses the membrane as a helical span at residues Leu-389–Tyr-417. Residues Arg-418–Arg-477 lie on the Cytoplasmic side of the membrane.

The protein belongs to the potassium channel family. S (TC 1.A.1.2) subfamily. Kv9.2/KCNS2 sub-subfamily. In terms of assembly, heterotetramer with KCNB1 and KCNB2. Does not form homomultimers.

It is found in the cell membrane. Functionally, potassium channel regulatory subunit that modulate the delayed rectifier voltage-gated potassium channel activity of KCNB1 and KCNB2 by altering their kinetics, expression levels, and shifting the half-inactivation potential to more polarized values. While it does not form functional channels on its own, it can form functional heterotetrameric channels with KCNB1 and KCNB2. Each regulatory subunit has unique regulatory properties that can lead to extensive inhibition, significant changes in kinetics, and/or substantial shifts in the voltage dependencies of the inactivation process. In Homo sapiens (Human), this protein is Delayed-rectifier potassium channel regulatory subunit KCNS2.